Consider the following 273-residue polypeptide: 3-((Z)-2-isocyanoethenyl)-1H-indole synthase (273 aa).

Fe cation is bound by residues His-105, Asp-107, and His-254.

This sequence belongs to the TfdA dioxygenase family. Fe(2+) is required as a cofactor.

The catalysed reaction is (2S)-3-(1H-indol-3-yl)-2-isocyanopropanoate + 2-oxoglutarate + O2 + H(+) = 3-[(Z)-2-isocyanoethenyl]-1H-indole + succinate + 2 CO2 + H2O. Involved in the biosynthesis of ambiguines, a family of hapalindole-type alkaloids. Responsible for the synthesis of Z-3-(2-isocyanoethen)-indole, a biosynthetic precursor to all ambiguines. This Fischerella ambigua (strain UTEX 1903) protein is 3-((Z)-2-isocyanoethenyl)-1H-indole synthase.